Here is a 362-residue protein sequence, read N- to C-terminus: GTPase Obg (362 aa).

Residues 1 to 159 enclose the Obg domain; it reads MKFLDEAKVY…KTIWLRLKLI (159 aa). The 168-residue stretch at 160–327 folds into the OBG-type G domain; the sequence is ADAGLVGLPN…VLRALRDVIV (168 aa). Residues 166–173, 191–195, 212–215, 279–282, and 308–310 contribute to the GTP site; these read GLPNAGKS, FTTLH, DIPG, SQID, and SAV. Positions 173 and 193 each coordinate Mg(2+). A disordered region spans residues 332–362; it reads EEKPAKVPKLRHRDMIVSDEGEGEDGADDQP. Residues 348–362 are compositionally biased toward acidic residues; that stretch reads VSDEGEGEDGADDQP.

The protein belongs to the TRAFAC class OBG-HflX-like GTPase superfamily. OBG GTPase family. As to quaternary structure, monomer. Requires Mg(2+) as cofactor.

The protein resides in the cytoplasm. Its function is as follows. An essential GTPase which binds GTP, GDP and possibly (p)ppGpp with moderate affinity, with high nucleotide exchange rates and a fairly low GTP hydrolysis rate. Plays a role in control of the cell cycle, stress response, ribosome biogenesis and in those bacteria that undergo differentiation, in morphogenesis control. The sequence is that of GTPase Obg from Rhizobium etli (strain CIAT 652).